Reading from the N-terminus, the 240-residue chain is Phosphatidylserine decarboxylase proenzyme (240 aa).

The active-site Schiff-base intermediate with substrate; via pyruvic acid is serine 205. Serine 205 bears the Pyruvic acid (Ser); by autocatalysis mark.

It belongs to the phosphatidylserine decarboxylase family. PSD-A subfamily. As to quaternary structure, heterodimer of a large membrane-associated beta subunit and a small pyruvoyl-containing alpha subunit. It depends on pyruvate as a cofactor. Is synthesized initially as an inactive proenzyme. Formation of the active enzyme involves a self-maturation process in which the active site pyruvoyl group is generated from an internal serine residue via an autocatalytic post-translational modification. Two non-identical subunits are generated from the proenzyme in this reaction, and the pyruvate is formed at the N-terminus of the alpha chain, which is derived from the carboxyl end of the proenzyme. The post-translation cleavage follows an unusual pathway, termed non-hydrolytic serinolysis, in which the side chain hydroxyl group of the serine supplies its oxygen atom to form the C-terminus of the beta chain, while the remainder of the serine residue undergoes an oxidative deamination to produce ammonia and the pyruvoyl prosthetic group on the alpha chain.

The protein localises to the cell membrane. It carries out the reaction a 1,2-diacyl-sn-glycero-3-phospho-L-serine + H(+) = a 1,2-diacyl-sn-glycero-3-phosphoethanolamine + CO2. It participates in phospholipid metabolism; phosphatidylethanolamine biosynthesis; phosphatidylethanolamine from CDP-diacylglycerol: step 2/2. Functionally, catalyzes the formation of phosphatidylethanolamine (PtdEtn) from phosphatidylserine (PtdSer). This is Phosphatidylserine decarboxylase proenzyme from Rhodopirellula baltica (strain DSM 10527 / NCIMB 13988 / SH1).